The chain runs to 214 residues: Holliday junction branch migration complex subunit RuvA (214 aa).

Residues 1–64 are domain I; sequence MITRIRGEML…EDAMTLYGFT (64 aa). Positions 65-143 are domain II; sequence SGEQLAVFEL…DITSKDAYQD (79 aa). The segment at 144 to 160 is flexible linker; that stretch reads ISASEKLDNTGEKLGIS. The tract at residues 161–214 is domain III; that stretch reads TRHKHLDELKAALSSLGYTNREIEKTVDAIQGQITEGQDMEELLRLALQKLNTK.

This sequence belongs to the RuvA family. In terms of assembly, homotetramer. Forms an RuvA(8)-RuvB(12)-Holliday junction (HJ) complex. HJ DNA is sandwiched between 2 RuvA tetramers; dsDNA enters through RuvA and exits via RuvB. An RuvB hexamer assembles on each DNA strand where it exits the tetramer. Each RuvB hexamer is contacted by two RuvA subunits (via domain III) on 2 adjacent RuvB subunits; this complex drives branch migration. In the full resolvosome a probable DNA-RuvA(4)-RuvB(12)-RuvC(2) complex forms which resolves the HJ.

It is found in the cytoplasm. Its function is as follows. The RuvA-RuvB-RuvC complex processes Holliday junction (HJ) DNA during genetic recombination and DNA repair, while the RuvA-RuvB complex plays an important role in the rescue of blocked DNA replication forks via replication fork reversal (RFR). RuvA specifically binds to HJ cruciform DNA, conferring on it an open structure. The RuvB hexamer acts as an ATP-dependent pump, pulling dsDNA into and through the RuvAB complex. HJ branch migration allows RuvC to scan DNA until it finds its consensus sequence, where it cleaves and resolves the cruciform DNA. This is Holliday junction branch migration complex subunit RuvA from Natranaerobius thermophilus (strain ATCC BAA-1301 / DSM 18059 / JW/NM-WN-LF).